The primary structure comprises 702 residues: Ribosomal RNA large subunit methyltransferase K/L (702 aa).

Residues 43 to 154 (LVYQSLMWSR…KETASIALDL (112 aa)) form the THUMP domain.

This sequence belongs to the methyltransferase superfamily. RlmKL family.

It localises to the cytoplasm. The catalysed reaction is guanosine(2445) in 23S rRNA + S-adenosyl-L-methionine = N(2)-methylguanosine(2445) in 23S rRNA + S-adenosyl-L-homocysteine + H(+). It carries out the reaction guanosine(2069) in 23S rRNA + S-adenosyl-L-methionine = N(2)-methylguanosine(2069) in 23S rRNA + S-adenosyl-L-homocysteine + H(+). Its function is as follows. Specifically methylates the guanine in position 2445 (m2G2445) and the guanine in position 2069 (m7G2069) of 23S rRNA. The chain is Ribosomal RNA large subunit methyltransferase K/L from Escherichia coli O1:K1 / APEC.